A 380-amino-acid polypeptide reads, in one-letter code: Cytochrome b (380 aa).

4 consecutive transmembrane segments (helical) span residues 34-54 (FGSL…LLAM), 78-99 (WLIR…YLHI), 114-134 (WNTG…GYVL), and 179-199 (FFAL…VHLT). Heme b is bound by residues histidine 84 and histidine 98. Residues histidine 183 and histidine 197 each coordinate heme b. Histidine 202 is an a ubiquinone binding site. The next 4 helical transmembrane spans lie at 227–247 (LKDI…ALFS), 289–309 (LGGV…PFLH), 321–341 (LSQL…WVGS), and 348–368 (FIII…ILFP).

This sequence belongs to the cytochrome b family. In terms of assembly, the cytochrome bc1 complex contains 11 subunits: 3 respiratory subunits (MT-CYB, CYC1 and UQCRFS1), 2 core proteins (UQCRC1 and UQCRC2) and 6 low-molecular weight proteins (UQCRH/QCR6, UQCRB/QCR7, UQCRQ/QCR8, UQCR10/QCR9, UQCR11/QCR10 and a cleavage product of UQCRFS1). This cytochrome bc1 complex then forms a dimer. It depends on heme b as a cofactor.

It is found in the mitochondrion inner membrane. Component of the ubiquinol-cytochrome c reductase complex (complex III or cytochrome b-c1 complex) that is part of the mitochondrial respiratory chain. The b-c1 complex mediates electron transfer from ubiquinol to cytochrome c. Contributes to the generation of a proton gradient across the mitochondrial membrane that is then used for ATP synthesis. This chain is Cytochrome b (MT-CYB), found in Procellaria parkinsoni (Black petrel).